We begin with the raw amino-acid sequence, 369 residues long: Nuclear hormone receptor family member nhr-64 (369 aa).

A DNA-binding region (nuclear receptor) is located at residues Glu-67–Val-142. NR C4-type zinc fingers lie at residues Gln-70–Lys-90 and Pro-106–Arg-130. Positions Pro-120–Asn-352 constitute an NR LBD domain.

Belongs to the nuclear hormone receptor family.

Its subcellular location is the nucleus. Orphan nuclear receptor. This Caenorhabditis elegans protein is Nuclear hormone receptor family member nhr-64 (nhr-64).